The sequence spans 312 residues: Tyrosine recombinase XerC (312 aa).

In terms of domain architecture, Core-binding (CB) spans 10–101 (PDLQAARESW…GIRSLLRFLE (92 aa)). Positions 122 to 306 (SLPKPLTASD…DTARLLEIYE (185 aa)) constitute a Tyr recombinase domain. Residues Arg165, Lys190, His258, Arg261, and His284 contribute to the active site. Catalysis depends on Tyr293, which acts as the O-(3'-phospho-DNA)-tyrosine intermediate.

Belongs to the 'phage' integrase family. XerC subfamily. In terms of assembly, forms a cyclic heterotetrameric complex composed of two molecules of XerC and two molecules of XerD.

The protein localises to the cytoplasm. Its function is as follows. Site-specific tyrosine recombinase, which acts by catalyzing the cutting and rejoining of the recombining DNA molecules. The XerC-XerD complex is essential to convert dimers of the bacterial chromosome into monomers to permit their segregation at cell division. It also contributes to the segregational stability of plasmids. In Mesorhizobium japonicum (strain LMG 29417 / CECT 9101 / MAFF 303099) (Mesorhizobium loti (strain MAFF 303099)), this protein is Tyrosine recombinase XerC.